Consider the following 163-residue polypeptide: Adenosine 5'-monophosphoramidase HINT2 (163 aa).

The transit peptide at 1 to 17 (MAAAVVLAAGLCVARRA) directs the protein to the mitochondrion. The HIT domain maps to 55 to 163 (IFSRILDRSL…GGRQLQWPPG (109 aa)). 2 residues coordinate AMP: Ser63 and Asp80. Lys119 carries the post-translational modification N6-acetyllysine. An AMP-binding site is contributed by Asn136. Lys139 carries the post-translational modification N6-acetyllysine. AMP contacts are provided by residues 142-145 (AQSV) and 149-151 (HIH). Residues 147 to 151 (HLHIH) carry the Histidine triad motif motif. His149 serves as the catalytic Tele-AMP-histidine intermediate.

It belongs to the HINT family.

It is found in the mitochondrion. It carries out the reaction adenosine 5'-phosphoramidate + H2O = AMP + NH4(+). Functionally, exhibits adenosine 5'-monophosphoramidase activity, hydrolyzing purine nucleotide phosphoramidates with a single phosphate group such as adenosine 5'monophosphoramidate (AMP-NH2) to yield AMP and NH2. Hydrolyzes adenosine 5'-O-p-nitrophenylphosphoramidate (AMP-pNA). May be involved in steroid biosynthesis. May play a role in apoptosis. The polypeptide is Adenosine 5'-monophosphoramidase HINT2 (Bos taurus (Bovine)).